Reading from the N-terminus, the 155-residue chain is SsrA-binding protein (155 aa).

Belongs to the SmpB family.

It localises to the cytoplasm. Its function is as follows. Required for rescue of stalled ribosomes mediated by trans-translation. Binds to transfer-messenger RNA (tmRNA), required for stable association of tmRNA with ribosomes. tmRNA and SmpB together mimic tRNA shape, replacing the anticodon stem-loop with SmpB. tmRNA is encoded by the ssrA gene; the 2 termini fold to resemble tRNA(Ala) and it encodes a 'tag peptide', a short internal open reading frame. During trans-translation Ala-aminoacylated tmRNA acts like a tRNA, entering the A-site of stalled ribosomes, displacing the stalled mRNA. The ribosome then switches to translate the ORF on the tmRNA; the nascent peptide is terminated with the 'tag peptide' encoded by the tmRNA and targeted for degradation. The ribosome is freed to recommence translation, which seems to be the essential function of trans-translation. This is SsrA-binding protein from Streptococcus pyogenes serotype M18 (strain MGAS8232).